Here is a 471-residue protein sequence, read N- to C-terminus: UDP-N-acetylmuramate--L-alanine ligase (471 aa).

114–120 contacts ATP; sequence GTHGKTT.

The protein belongs to the MurCDEF family.

The protein resides in the cytoplasm. The catalysed reaction is UDP-N-acetyl-alpha-D-muramate + L-alanine + ATP = UDP-N-acetyl-alpha-D-muramoyl-L-alanine + ADP + phosphate + H(+). It participates in cell wall biogenesis; peptidoglycan biosynthesis. Cell wall formation. The protein is UDP-N-acetylmuramate--L-alanine ligase of Agrobacterium fabrum (strain C58 / ATCC 33970) (Agrobacterium tumefaciens (strain C58)).